The chain runs to 653 residues: Phospholipid-transporting ATPase VD (653 aa).

Topologically, residues 1-375 (MACNLCYEAE…GHWCYTRLSN (375 aa)) are cytoplasmic. Residues glutamate 14, phenylalanine 56, lysine 80, arginine 124, threonine 204, glycine 205, aspartate 206, 259 to 266 (GLIITGKT), arginine 293, and lysine 299 each bind ATP. Aspartate 319 is a binding site for Mg(2+). Positions 322 and 323 each coordinate ATP. Aspartate 323 provides a ligand contact to Mg(2+). A helical membrane pass occupies residues 376–396 (MILYFFYKNVAYVNLLFWYQF). Residues 397–407 (FCGFSGTSMTD) lie on the Exoplasmic loop side of the membrane. The chain crosses the membrane as a helical span at residues 408 to 428 (YWVLIFFNLLFTSAPPVIYGV). The Cytoplasmic segment spans residues 429-458 (LEKDVSAETLMQLPELYKSGQKSEAYLPHT). Residues 459 to 480 (FWITLLDAFYQSLVCFFVPYFT) traverse the membrane as a helical segment. Residues 481–487 (YQGSDID) are Exoplasmic loop-facing. The helical transmembrane segment at 488-510 (IFAFGNPLNTAALFIILLHLIIE) threads the bilayer. Residues 511-516 (SKSLTW) are Cytoplasmic-facing. Residues 517-537 (IHMLVITGSILSYFLFAIVFG) form a helical membrane-spanning segment. The Exoplasmic loop segment spans residues 538-555 (AMCVTCNPPSNPYWIMQE). A helical transmembrane segment spans residues 556–580 (HVLDPVFYLVCILTTCIALLPRFVY). Topologically, residues 581–653 (RGAGKMNQVT…AFEMARPCKD (73 aa)) are cytoplasmic.

The protein belongs to the cation transport ATPase (P-type) (TC 3.A.3) family. Type IV subfamily. Component of a P4-ATPase flippase complex which consists of a catalytic alpha subunit ATP10A and an accessory beta subunit TMEM30A. The cofactor is Mg(2+). Autophosphorylated at the conserved aspartate of the P-type ATPase signature sequence.

The protein resides in the cell membrane. Its subcellular location is the endoplasmic reticulum membrane. It carries out the reaction ATP + H2O + phospholipidSide 1 = ADP + phosphate + phospholipidSide 2.. The catalysed reaction is a beta-D-glucosyl-(1&lt;-&gt;1')-N-acylsphing-4-enine(out) + ATP + H2O = a beta-D-glucosyl-(1&lt;-&gt;1')-N-acylsphing-4-enine(in) + ADP + phosphate + H(+). Its function is as follows. Catalytic component of a P4-ATPase flippase complex, which catalyzes the hydrolysis of ATP coupled to the transport of glucosylceramide (GlcCer) from the outer to the inner leaflet of the plasma membrane. The protein is Phospholipid-transporting ATPase VD (ATP10D) of Macaca fascicularis (Crab-eating macaque).